Reading from the N-terminus, the 346-residue chain is Biotin synthase (346 aa).

Positions 38-256 (RQVQVSTLLS…IAVARIMMPT (219 aa)) constitute a Radical SAM core domain. 3 residues coordinate [4Fe-4S] cluster: Cys-53, Cys-57, and Cys-60. Residues Cys-97, Cys-128, Cys-188, and Arg-260 each coordinate [2Fe-2S] cluster.

This sequence belongs to the radical SAM superfamily. Biotin synthase family. In terms of assembly, homodimer. [4Fe-4S] cluster serves as cofactor. The cofactor is [2Fe-2S] cluster.

The catalysed reaction is (4R,5S)-dethiobiotin + (sulfur carrier)-SH + 2 reduced [2Fe-2S]-[ferredoxin] + 2 S-adenosyl-L-methionine = (sulfur carrier)-H + biotin + 2 5'-deoxyadenosine + 2 L-methionine + 2 oxidized [2Fe-2S]-[ferredoxin]. It functions in the pathway cofactor biosynthesis; biotin biosynthesis; biotin from 7,8-diaminononanoate: step 2/2. Catalyzes the conversion of dethiobiotin (DTB) to biotin by the insertion of a sulfur atom into dethiobiotin via a radical-based mechanism. This Escherichia coli O6:H1 (strain CFT073 / ATCC 700928 / UPEC) protein is Biotin synthase.